The chain runs to 83 residues: Small ribosomal subunit protein bS16 (83 aa).

It belongs to the bacterial ribosomal protein bS16 family.

The chain is Small ribosomal subunit protein bS16 from Pseudomonas aeruginosa (strain UCBPP-PA14).